The chain runs to 116 residues: MKPHMSATVLRAPRVAAILLAVVLAAVLATAVNGAQRCGDQARGAKCPNCLCCGKYGFCGSGDAYCGAGSCQSQCRGCRDDVVGQALPAEPGSTRATAASSASARGLNLTATTGGP.

The signal sequence occupies residues 1-34; the sequence is MKPHMSATVLRAPRVAAILLAVVLAAVLATAVNG. The Chitin-binding type-1 domain occupies 35–77; the sequence is AQRCGDQARGAKCPNCLCCGKYGFCGSGDAYCGAGSCQSQCRG. Cystine bridges form between C38-C53, C47-C59, C50-C78, C52-C66, and C71-C75. Positions 80–116 are excised as a propeptide; the sequence is DDVVGQALPAEPGSTRATAASSASARGLNLTATTGGP. Residues 89 to 116 form a disordered region; the sequence is AEPGSTRATAASSASARGLNLTATTGGP. Positions 93–105 are enriched in low complexity; that stretch reads STRATAASSASAR.

In terms of biological role, binds chitin. Has antifungal activity against the fungi F.solani (IC(50)=5 ug/ml), F.verticillioides (IC(50)=30 ug/ml), F.oxysporum (IC(50)=5 ug/ml), B.sorokiniana (IC(50)=5 ug/ml), B.cinerea (IC(50)=20 ug/ml) and N.crassa (IC(50)=10 ug/ml). Inhibits hyphal elongation and causes browning of hyphae in F.oxysporum. Causes destruction and discoloration of spores in B.sorokiniana. Inhibits the development of disease caused by the fungus P.infestans on potato tubers. Has antibacterial activity against the Gram-negative bacteria P.syringae and E.carotovora, and the Gram-positive bacterium C.michiganensis. Its function is as follows. Has antifungal activity against F.verticillioides (IC(50)=2.7 ug/ml). At concentrations between 45 uM and 225 uM, inhibits activity of metalloproteinase fungalysin Fv-cpm from F.verticillioides. In Triticum kiharae (Wheat), this protein is Antimicrobial peptide 1b.